The following is a 77-amino-acid chain: Acyl carrier protein (77 aa).

The region spanning 2–77 (SEKLQKIQAL…DAVAYIEERS (76 aa)) is the Carrier domain. Residue S37 is modified to O-(pantetheine 4'-phosphoryl)serine.

Belongs to the acyl carrier protein (ACP) family. 4'-phosphopantetheine is transferred from CoA to a specific serine of apo-ACP by AcpS. This modification is essential for activity because fatty acids are bound in thioester linkage to the sulfhydryl of the prosthetic group.

The protein resides in the cytoplasm. The protein operates within lipid metabolism; fatty acid biosynthesis. Functionally, carrier of the growing fatty acid chain in fatty acid biosynthesis. This is Acyl carrier protein from Desulforudis audaxviator (strain MP104C).